Here is a 443-residue protein sequence, read N- to C-terminus: MQVSVETLEGLERKVTVSVPTEKVEEEVSSRLRNLARKVKIDGFRPGKVPFNVVKSRFSDSVREEVAREMVQSTLYEALQKNELVPAGYPHVEPLEIEPGKDFKYTAVFEVMPVFEVVELNQAPVELIQSEVSDKDVDNMIEKLREQNKEWHEVTHAVKKGDKVVIDFQGFLDDKPFQGGSAEGYELVIGSGSMIPGFEDGIIGGKIDKPLDIKVSFPEDYGHKDLAGKEATFKITIKKIMEGKLPALDEAFAEKFNIKEGGIESLKKDIRENMARELERRVNMMNREKLFDSLMSVNHVELPIALIDKEIEHLKHDMYHRLFGHEHKDDEKIPDFPRELFEEQAKRRVHLGLLFAEYVKKHEIVADNDKVNAMIDKFASAYESPDELRAWYQSSKEHMAEVEALVMEDMVADKIAEDAKLKYKNMDYDSVMNPKKGTEKKGE.

One can recognise a PPIase FKBP-type domain in the interval 161 to 246 (GDKVVIDFQG…IKKIMEGKLP (86 aa)).

This sequence belongs to the FKBP-type PPIase family. Tig subfamily.

The protein localises to the cytoplasm. The catalysed reaction is [protein]-peptidylproline (omega=180) = [protein]-peptidylproline (omega=0). Functionally, involved in protein export. Acts as a chaperone by maintaining the newly synthesized protein in an open conformation. Functions as a peptidyl-prolyl cis-trans isomerase. This is Trigger factor from Legionella pneumophila (strain Lens).